Here is a 397-residue protein sequence, read N- to C-terminus: Alanine racemase, biosynthetic (397 aa).

Lys-42 (proton acceptor; specific for D-alanine) is an active-site residue. Lys-42 is subject to N6-(pyridoxal phosphate)lysine. Arg-136 provides a ligand contact to substrate. Tyr-257 acts as the Proton acceptor; specific for L-alanine in catalysis. Met-305 contributes to the substrate binding site. The interval 373–397 (ANRPTEAMSNPSRAKSRPMDKQALI) is disordered.

This sequence belongs to the alanine racemase family. It depends on pyridoxal 5'-phosphate as a cofactor.

It catalyses the reaction L-alanine = D-alanine. Its pathway is amino-acid biosynthesis; D-alanine biosynthesis; D-alanine from L-alanine: step 1/1. It participates in cell wall biogenesis; peptidoglycan biosynthesis. Functionally, catalyzes the interconversion of L-alanine and D-alanine. Provides the D-alanine required for cell wall biosynthesis. The polypeptide is Alanine racemase, biosynthetic (alr) (Mesorhizobium japonicum (strain LMG 29417 / CECT 9101 / MAFF 303099) (Mesorhizobium loti (strain MAFF 303099))).